Consider the following 221-residue polypeptide: Jacalin-related lectin 47 (221 aa).

Jacalin-type lectin domains lie at Met1–Pro64 and Ser71–Pro217.

It belongs to the jacalin lectin family.

The chain is Jacalin-related lectin 47 (JAL47) from Arabidopsis thaliana (Mouse-ear cress).